A 351-amino-acid chain; its full sequence is UDP-3-O-acylglucosamine N-acyltransferase (351 aa).

Catalysis depends on histidine 240, which acts as the Proton acceptor.

Belongs to the transferase hexapeptide repeat family. LpxD subfamily. In terms of assembly, homotrimer.

The catalysed reaction is a UDP-3-O-[(3R)-3-hydroxyacyl]-alpha-D-glucosamine + a (3R)-hydroxyacyl-[ACP] = a UDP-2-N,3-O-bis[(3R)-3-hydroxyacyl]-alpha-D-glucosamine + holo-[ACP] + H(+). It functions in the pathway bacterial outer membrane biogenesis; LPS lipid A biosynthesis. Functionally, catalyzes the N-acylation of UDP-3-O-acylglucosamine using 3-hydroxyacyl-ACP as the acyl donor. Is involved in the biosynthesis of lipid A, a phosphorylated glycolipid that anchors the lipopolysaccharide to the outer membrane of the cell. In Pseudomonas savastanoi pv. phaseolicola (strain 1448A / Race 6) (Pseudomonas syringae pv. phaseolicola (strain 1448A / Race 6)), this protein is UDP-3-O-acylglucosamine N-acyltransferase.